Reading from the N-terminus, the 370-residue chain is NADH-quinone oxidoreductase subunit D 2 (370 aa).

This sequence belongs to the complex I 49 kDa subunit family. In terms of assembly, NDH-1 is composed of 14 different subunits. Subunits NuoB, C, D, E, F, and G constitute the peripheral sector of the complex.

It is found in the cell membrane. It carries out the reaction a quinone + NADH + 5 H(+)(in) = a quinol + NAD(+) + 4 H(+)(out). Its function is as follows. NDH-1 shuttles electrons from NADH, via FMN and iron-sulfur (Fe-S) centers, to quinones in the respiratory chain. The immediate electron acceptor for the enzyme in this species is believed to be ubiquinone. Couples the redox reaction to proton translocation (for every two electrons transferred, four hydrogen ions are translocated across the cytoplasmic membrane), and thus conserves the redox energy in a proton gradient. The sequence is that of NADH-quinone oxidoreductase subunit D 2 from Herpetosiphon aurantiacus (strain ATCC 23779 / DSM 785 / 114-95).